A 201-amino-acid polypeptide reads, in one-letter code: Large ribosomal subunit protein uL4 (201 aa).

A disordered region spans residues 43-73 (SRGQKTRAEVTGSGKKPWRQKGTGRARSGSV).

Belongs to the universal ribosomal protein uL4 family. In terms of assembly, part of the 50S ribosomal subunit.

Its function is as follows. One of the primary rRNA binding proteins, this protein initially binds near the 5'-end of the 23S rRNA. It is important during the early stages of 50S assembly. It makes multiple contacts with different domains of the 23S rRNA in the assembled 50S subunit and ribosome. Forms part of the polypeptide exit tunnel. The protein is Large ribosomal subunit protein uL4 of Sodalis glossinidius (strain morsitans).